Here is a 1848-residue protein sequence, read N- to C-terminus: Cellulose-binding protein A (1848 aa).

The N-terminal stretch at Met1–Ala28 is a signal peptide. The region spanning Ala29–Gly190 is the CBM3 domain. 9 Cohesin domains span residues Val291–Ile428, Met435–Ile570, Val668–Ile801, Val810–Ile943, Val952–Ile1085, Val1094–Ile1227, Val1236–Ile1369, Val1377–Ile1511, and Phe1709–Val1847.

Post-translationally, the N-terminus is blocked. In terms of processing, glycosylated.

It is found in the secreted. Binds to cellulose fibers and coordinates cellulase enzymes. This Clostridium cellulovorans protein is Cellulose-binding protein A (cbpA).